The following is a 306-amino-acid chain: 4-hydroxybenzoate geranyltransferase 2 (306 aa).

The next 8 helical transmembrane spans lie at 38 to 58, 61 to 81, 119 to 139, 153 to 173, 178 to 198, 229 to 249, 251 to 271, and 285 to 305; these read IGSW…ADLG, PKML…GCTI, LFIG…LAIV, ITYW…LLGS, GSVV…WTLV, IWIT…GFIV, IGLP…WQIF, and FVSN…GRLF.

Belongs to the UbiA prenyltransferase family. It depends on Mg(2+) as a cofactor. Expressed only in roots.

The protein localises to the endoplasmic reticulum membrane. It catalyses the reaction 4-hydroxybenzoate + (2E)-geranyl diphosphate = 3-geranyl-4-hydroxybenzoate + diphosphate. In terms of biological role, prenyltransferase involved in the biosynthesis of shikonin, a naphthoquinone secondary metabolite. Could accept only geranyl diphosphate and not dimethylallyl diphosphate, farnesyl diphosphate, or geranylgeranyl diphosphate as substrate. In Lithospermum erythrorhizon (Purple gromwell), this protein is 4-hydroxybenzoate geranyltransferase 2 (PGT-2).